The primary structure comprises 59 residues: Cecropin-C (59 aa).

The first 23 residues, 1 to 23, serve as a signal peptide directing secretion; that stretch reads MNFKLIFLVALVLMAAFLGQTEG. V58 is subject to Valine amide.

This sequence belongs to the cecropin family.

It is found in the secreted. Its function is as follows. Cecropins have lytic and antibacterial activity against several Gram-positive and Gram-negative bacteria. This is Cecropin-C (CecC) from Anopheles gambiae (African malaria mosquito).